A 501-amino-acid polypeptide reads, in one-letter code: Nuclear receptor-binding protein 2 (501 aa).

A disordered region spans residues 1–33; it reads MAAPEPAPRRAREREREREDESEDESDILEESP. A compositionally biased stretch (basic and acidic residues) spans 7–19; sequence APRRARERERERE. The span at 20 to 30 shows a compositional bias: acidic residues; that stretch reads DESEDESDILE. The 269-residue stretch at 38-306 folds into the Protein kinase domain; it reads QKRREQVNQG…AHSLLFHRVL (269 aa). 2 positions are modified to phosphothreonine: Thr-409 and Thr-411.

Belongs to the protein kinase superfamily. Ser/Thr protein kinase family.

It is found in the cytoplasm. In terms of biological role, may regulate apoptosis of neural progenitor cells during their differentiation. In Homo sapiens (Human), this protein is Nuclear receptor-binding protein 2.